Reading from the N-terminus, the 171-residue chain is Phosphopantetheine adenylyltransferase (171 aa).

Residue Thr-9 participates in substrate binding. ATP contacts are provided by residues 9–10 and His-17; that span reads TF. Residues Lys-41, Leu-73, and Arg-87 each coordinate substrate. ATP-binding positions include 88–90, Glu-98, and 123–129; these read GLR and YQFISGT.

It belongs to the bacterial CoaD family. Homohexamer. The cofactor is Mg(2+).

The protein resides in the cytoplasm. The catalysed reaction is (R)-4'-phosphopantetheine + ATP + H(+) = 3'-dephospho-CoA + diphosphate. It participates in cofactor biosynthesis; coenzyme A biosynthesis; CoA from (R)-pantothenate: step 4/5. Reversibly transfers an adenylyl group from ATP to 4'-phosphopantetheine, yielding dephospho-CoA (dPCoA) and pyrophosphate. In Paraburkholderia phytofirmans (strain DSM 17436 / LMG 22146 / PsJN) (Burkholderia phytofirmans), this protein is Phosphopantetheine adenylyltransferase.